Reading from the N-terminus, the 360-residue chain is 3-dehydroquinate synthase (360 aa).

NAD(+)-binding positions include 69-74 (DGEAYK), 103-107 (GVIGD), 127-128 (TT), Lys-140, Lys-149, and 167-170 (CLQT). Zn(2+)-binding residues include Glu-182, His-245, and His-262.

Belongs to the sugar phosphate cyclases superfamily. Dehydroquinate synthase family. It depends on Co(2+) as a cofactor. The cofactor is Zn(2+). NAD(+) serves as cofactor.

It is found in the cytoplasm. It carries out the reaction 7-phospho-2-dehydro-3-deoxy-D-arabino-heptonate = 3-dehydroquinate + phosphate. It functions in the pathway metabolic intermediate biosynthesis; chorismate biosynthesis; chorismate from D-erythrose 4-phosphate and phosphoenolpyruvate: step 2/7. Functionally, catalyzes the conversion of 3-deoxy-D-arabino-heptulosonate 7-phosphate (DAHP) to dehydroquinate (DHQ). This Aeromonas hydrophila subsp. hydrophila (strain ATCC 7966 / DSM 30187 / BCRC 13018 / CCUG 14551 / JCM 1027 / KCTC 2358 / NCIMB 9240 / NCTC 8049) protein is 3-dehydroquinate synthase.